The following is a 216-amino-acid chain: Probable GTP-binding protein EngB (216 aa).

The region spanning 26 to 210 (PMATIIFAGR…KNRIFEVIRE (185 aa)) is the EngB-type G domain. GTP is bound by residues 34–41 (GRSNVGKS), 59–63 (GVTRK), 76–79 (DMPG), 156–159 (NKLD), and 189–191 (ISA). Ser-41 and Thr-61 together coordinate Mg(2+).

Belongs to the TRAFAC class TrmE-Era-EngA-EngB-Septin-like GTPase superfamily. EngB GTPase family. Mg(2+) is required as a cofactor.

Necessary for normal cell division and for the maintenance of normal septation. The sequence is that of Probable GTP-binding protein EngB from Pyrococcus horikoshii (strain ATCC 700860 / DSM 12428 / JCM 9974 / NBRC 100139 / OT-3).